The chain runs to 329 residues: DNA-directed RNA polymerase subunit alpha (329 aa).

An alpha N-terminal domain (alpha-NTD) region spans residues 1-235 (MQGSVTEFLK…EQLEAFVDLR (235 aa)). The tract at residues 249-329 (FDPILLRPVD…NWPPASIADE (81 aa)) is alpha C-terminal domain (alpha-CTD).

Belongs to the RNA polymerase alpha chain family. Homodimer. The RNAP catalytic core consists of 2 alpha, 1 beta, 1 beta' and 1 omega subunit. When a sigma factor is associated with the core the holoenzyme is formed, which can initiate transcription.

The catalysed reaction is RNA(n) + a ribonucleoside 5'-triphosphate = RNA(n+1) + diphosphate. Functionally, DNA-dependent RNA polymerase catalyzes the transcription of DNA into RNA using the four ribonucleoside triphosphates as substrates. This is DNA-directed RNA polymerase subunit alpha from Cronobacter sakazakii (strain ATCC BAA-894) (Enterobacter sakazakii).